Here is a 311-residue protein sequence, read N- to C-terminus: Methionyl-tRNA formyltransferase (311 aa).

110–113 (SLLP) is a binding site for (6S)-5,6,7,8-tetrahydrofolate.

The protein belongs to the Fmt family.

The enzyme catalyses L-methionyl-tRNA(fMet) + (6R)-10-formyltetrahydrofolate = N-formyl-L-methionyl-tRNA(fMet) + (6S)-5,6,7,8-tetrahydrofolate + H(+). In terms of biological role, attaches a formyl group to the free amino group of methionyl-tRNA(fMet). The formyl group appears to play a dual role in the initiator identity of N-formylmethionyl-tRNA by promoting its recognition by IF2 and preventing the misappropriation of this tRNA by the elongation apparatus. This is Methionyl-tRNA formyltransferase from Acidobacterium capsulatum (strain ATCC 51196 / DSM 11244 / BCRC 80197 / JCM 7670 / NBRC 15755 / NCIMB 13165 / 161).